The sequence spans 536 residues: 2-isopropylmalate synthase (536 aa).

The 266-residue stretch at 8–273 (VLIFDTTLRD…FFGKDSESPT (266 aa)) folds into the Pyruvate carboxyltransferase domain. Residues Asp17, His208, His210, and Asn244 each coordinate Mn(2+). The tract at residues 408 to 536 (KLHLVQVSCG…PQHDVVKANL (129 aa)) is regulatory domain.

The protein belongs to the alpha-IPM synthase/homocitrate synthase family. LeuA type 1 subfamily. In terms of assembly, homodimer. Mn(2+) serves as cofactor.

It is found in the cytoplasm. It catalyses the reaction 3-methyl-2-oxobutanoate + acetyl-CoA + H2O = (2S)-2-isopropylmalate + CoA + H(+). It participates in amino-acid biosynthesis; L-leucine biosynthesis; L-leucine from 3-methyl-2-oxobutanoate: step 1/4. Functionally, catalyzes the condensation of the acetyl group of acetyl-CoA with 3-methyl-2-oxobutanoate (2-ketoisovalerate) to form 3-carboxy-3-hydroxy-4-methylpentanoate (2-isopropylmalate). The sequence is that of 2-isopropylmalate synthase from Prochlorococcus marinus (strain SARG / CCMP1375 / SS120).